Reading from the N-terminus, the 86-residue chain is Large ribosomal subunit protein uL23 (86 aa).

Belongs to the universal ribosomal protein uL23 family. Part of the 50S ribosomal subunit. Contacts protein L29.

Its function is as follows. Binds to 23S rRNA. One of the proteins that surrounds the polypeptide exit tunnel on the outside of the ribosome. In Thermococcus onnurineus (strain NA1), this protein is Large ribosomal subunit protein uL23.